A 297-amino-acid chain; its full sequence is Phosphatidylserine decarboxylase proenzyme (297 aa).

Residues Asp-90, His-147, and Ser-252 each act as charge relay system; for autoendoproteolytic cleavage activity in the active site. Ser-252 (schiff-base intermediate with substrate; via pyruvic acid; for decarboxylase activity) is an active-site residue. Ser-252 carries the pyruvic acid (Ser); by autocatalysis modification.

The protein belongs to the phosphatidylserine decarboxylase family. PSD-B subfamily. Prokaryotic type I sub-subfamily. Heterodimer of a large membrane-associated beta subunit and a small pyruvoyl-containing alpha subunit. Requires pyruvate as cofactor. Post-translationally, is synthesized initially as an inactive proenzyme. Formation of the active enzyme involves a self-maturation process in which the active site pyruvoyl group is generated from an internal serine residue via an autocatalytic post-translational modification. Two non-identical subunits are generated from the proenzyme in this reaction, and the pyruvate is formed at the N-terminus of the alpha chain, which is derived from the carboxyl end of the proenzyme. The autoendoproteolytic cleavage occurs by a canonical serine protease mechanism, in which the side chain hydroxyl group of the serine supplies its oxygen atom to form the C-terminus of the beta chain, while the remainder of the serine residue undergoes an oxidative deamination to produce ammonia and the pyruvoyl prosthetic group on the alpha chain. During this reaction, the Ser that is part of the protease active site of the proenzyme becomes the pyruvoyl prosthetic group, which constitutes an essential element of the active site of the mature decarboxylase.

It is found in the cell membrane. The enzyme catalyses a 1,2-diacyl-sn-glycero-3-phospho-L-serine + H(+) = a 1,2-diacyl-sn-glycero-3-phosphoethanolamine + CO2. It participates in phospholipid metabolism; phosphatidylethanolamine biosynthesis; phosphatidylethanolamine from CDP-diacylglycerol: step 2/2. Catalyzes the formation of phosphatidylethanolamine (PtdEtn) from phosphatidylserine (PtdSer). The chain is Phosphatidylserine decarboxylase proenzyme from Stutzerimonas stutzeri (strain A1501) (Pseudomonas stutzeri).